The primary structure comprises 174 residues: Cytochrome c-type biogenesis protein CcmE (174 aa).

Over 1–8 (MNPRRKSR) the chain is Cytoplasmic. A helical; Signal-anchor for type II membrane protein transmembrane segment spans residues 9 to 29 (LSVVLFIFLGISVASALVLYA). The Periplasmic portion of the chain corresponds to 30–174 (LRQNIDLFYT…QEKQFKEGNQ (145 aa)). Heme-binding residues include His131 and Tyr135. The disordered stretch occupies residues 149–174 (KPMGISDLKNESDRDRQEKQFKEGNQ). Residues 156–174 (LKNESDRDRQEKQFKEGNQ) are compositionally biased toward basic and acidic residues.

This sequence belongs to the CcmE/CycJ family.

It localises to the cell inner membrane. Functionally, heme chaperone required for the biogenesis of c-type cytochromes. Transiently binds heme delivered by CcmC and transfers the heme to apo-cytochromes in a process facilitated by CcmF and CcmH. The protein is Cytochrome c-type biogenesis protein CcmE of Histophilus somni (strain 129Pt) (Haemophilus somnus).